A 143-amino-acid polypeptide reads, in one-letter code: Small ribosomal subunit protein eS12 (143 aa).

Belongs to the eukaryotic ribosomal protein eS12 family. Component of the small ribosomal subunit. Mature ribosomes consist of a small (40S) and a large (60S) subunit. The 40S subunit contains about 32 different proteins and 1 molecule of RNA (18S). The 60S subunit contains 45 different proteins and 3 molecules of RNA (25S, 5.8S and 5S).

It is found in the cytoplasm. Its function is as follows. Component of the ribosome, a large ribonucleoprotein complex responsible for the synthesis of proteins in the cell. The small ribosomal subunit (SSU) binds messenger RNAs (mRNAs) and translates the encoded message by selecting cognate aminoacyl-transfer RNA (tRNA) molecules. The large subunit (LSU) contains the ribosomal catalytic site termed the peptidyl transferase center (PTC), which catalyzes the formation of peptide bonds, thereby polymerizing the amino acids delivered by tRNAs into a polypeptide chain. The nascent polypeptides leave the ribosome through a tunnel in the LSU and interact with protein factors that function in enzymatic processing, targeting, and the membrane insertion of nascent chains at the exit of the ribosomal tunnel. The protein is Small ribosomal subunit protein eS12 (RPS12) of Candida albicans (strain SC5314 / ATCC MYA-2876) (Yeast).